Here is a 267-residue protein sequence, read N- to C-terminus: Thiamine thiazole synthase (267 aa).

NAD(+)-binding positions include serine 47, 66–67 (ER), glycine 74, valine 138, and 164–166 (HID). Fe cation-binding residues include aspartate 166 and histidine 181. The NAD(+) site is built by serine 184 and methionine 230. Arginine 240 contributes to the glycine binding site.

Belongs to the THI4 family. As to quaternary structure, homooctamer; tetramer of dimers. Requires Fe(2+) as cofactor.

It catalyses the reaction hydrogen sulfide + glycine + NAD(+) = ADP-5-ethyl-4-methylthiazole-2-carboxylate + nicotinamide + 3 H2O + H(+). It participates in cofactor biosynthesis; thiamine diphosphate biosynthesis. Its function is as follows. Involved in the biosynthesis of the thiazole moiety of thiamine. Catalyzes the conversion of NAD and glycine to adenosine diphosphate 5-(2-hydroxyethyl)-4-methylthiazole-2-carboxylate (ADT), an adenylated thiazole intermediate, using free sulfide as a source of sulfur. The protein is Thiamine thiazole synthase of Methanocaldococcus jannaschii (strain ATCC 43067 / DSM 2661 / JAL-1 / JCM 10045 / NBRC 100440) (Methanococcus jannaschii).